Consider the following 305-residue polypeptide: MTATIDVDNLMSRLLNVGMSGGRLTTSVNEQELQTCCAVAKSVFASQASLLEVEPPIIVCGDIHGQYSDLLRIFDKNGFPPDINFLFLGDYVDRGRQNIETICLMFCFKIKYPENFFMLRGNHECPAINRVYGFYEECNRRYKSTRLWSIFQDTFNWMPLCGLIGSRILCMHGGLSPHLQTLDQLRQLPRPQDPPNPSIGIDLLWADPDQWVKGWQANTRGVSYVFGQDVVADVCSRLDIDLVARAHQVVQDGYEFFASKKMVTIFSAPHYCGQFDNSAATMKVDENMVCTFVMYKPTPKSLRKG.

Mn(2+) contacts are provided by aspartate 62, histidine 64, aspartate 90, and asparagine 122. The Proton donor role is filled by histidine 123. 2 residues coordinate Mn(2+): histidine 172 and histidine 247.

The protein belongs to the PPP phosphatase family. Expressed in male germline including spermatocytes, spermatids and spermatozoa.

It localises to the chromosome. Its subcellular location is the cell projection. The protein localises to the pseudopodium. It is found in the cytoplasm. It catalyses the reaction O-phospho-L-seryl-[protein] + H2O = L-seryl-[protein] + phosphate. The catalysed reaction is O-phospho-L-threonyl-[protein] + H2O = L-threonyl-[protein] + phosphate. Functionally, probable phosphatase which plays a redundant role with gsp-4 in spermatogenesis by regulating sister chromatid segregation during meiosis. In addition, involved in sperm motility by controlling the dynamic disassembly of major sperm proteins (MSP) in the spermatozoan pseudopodium. In Caenorhabditis elegans, this protein is Serine/threonine-protein phosphatase PP1-delta.